Here is a 353-residue protein sequence, read N- to C-terminus: Photosystem II D2 protein (353 aa).

Threonine 2 bears the N-acetylthreonine mark. Threonine 2 carries the post-translational modification Phosphothreonine. The helical transmembrane segment at 41–61 (CAYFALGGWFTGTTFVTSWYT) threads the bilayer. Histidine 118 is a chlorophyll a binding site. Residues 125 to 141 (GFMLRQFELARSVQLRP) traverse the membrane as a helical segment. Pheophytin a is bound by residues glutamine 130 and asparagine 143. The helical transmembrane segment at 153–166 (VFVSVFLIYPLGQS) threads the bilayer. Histidine 198 is a chlorophyll a binding site. The chain crosses the membrane as a helical span at residues 208–228 (AALLCAIHGATVENTLFEDGD). A plastoquinone contacts are provided by histidine 215 and phenylalanine 262. Residue histidine 215 coordinates Fe cation. Fe cation is bound at residue histidine 269. Residues 279 to 295 (GLWMSALGVVGLALNLR) traverse the membrane as a helical segment.

The protein belongs to the reaction center PufL/M/PsbA/D family. As to quaternary structure, PSII is composed of 1 copy each of membrane proteins PsbA, PsbB, PsbC, PsbD, PsbE, PsbF, PsbH, PsbI, PsbJ, PsbK, PsbL, PsbM, PsbT, PsbX, PsbY, PsbZ, Psb30/Ycf12, at least 3 peripheral proteins of the oxygen-evolving complex and a large number of cofactors. It forms dimeric complexes. Requires The D1/D2 heterodimer binds P680, chlorophylls that are the primary electron donor of PSII, and subsequent electron acceptors. It shares a non-heme iron and each subunit binds pheophytin, quinone, additional chlorophylls, carotenoids and lipids. There is also a Cl(-1) ion associated with D1 and D2, which is required for oxygen evolution. The PSII complex binds additional chlorophylls, carotenoids and specific lipids. as cofactor.

It localises to the plastid. It is found in the chloroplast thylakoid membrane. It catalyses the reaction 2 a plastoquinone + 4 hnu + 2 H2O = 2 a plastoquinol + O2. Its function is as follows. Photosystem II (PSII) is a light-driven water:plastoquinone oxidoreductase that uses light energy to abstract electrons from H(2)O, generating O(2) and a proton gradient subsequently used for ATP formation. It consists of a core antenna complex that captures photons, and an electron transfer chain that converts photonic excitation into a charge separation. The D1/D2 (PsbA/PsbD) reaction center heterodimer binds P680, the primary electron donor of PSII as well as several subsequent electron acceptors. D2 is needed for assembly of a stable PSII complex. The protein is Photosystem II D2 protein of Nandina domestica (Heavenly bamboo).